Consider the following 480-residue polypeptide: Probable histone deacetylase 1-B (480 aa).

The tract at residues 10-321 is histone deacetylase; sequence KVCYYYDGDV…WTYETAVALD (312 aa). His141 is a catalytic residue. Residues 387 to 480 form a disordered region; it reads DSVHDDSGEE…KRVKEETKSV (94 aa). Residues 401–416 are compositionally biased toward basic and acidic residues; that stretch reads PDKRISIRSSDKRIAC. Acidic residues predominate over residues 417–427; it reads DEEFSDSEDEG. Residues 443 to 480 are compositionally biased toward basic and acidic residues; sequence VKTEEEKEGEDKKDVKEEEKAKDEKTDSKRVKEETKSV.

The protein belongs to the histone deacetylase family. HD type 1 subfamily. As to quaternary structure, found in a large complex with RBBP4 and MI-2.

Its subcellular location is the nucleus. The protein resides in the cytoplasm. The enzyme catalyses N(6)-acetyl-L-lysyl-[histone] + H2O = L-lysyl-[histone] + acetate. It catalyses the reaction N(6)-acetyl-L-lysyl-[protein] + H2O = L-lysyl-[protein] + acetate. The catalysed reaction is N(6)-(2E)-butenoyl-L-lysyl-[protein] + H2O = (2E)-2-butenoate + L-lysyl-[protein]. In terms of biological role, histone deacetylase that catalyzes the deacetylation of lysine residues on the N-terminal part of the core histones (H2A, H2B, H3 and H4). Histone deacetylation gives a tag for epigenetic repression and plays an important role in transcriptional regulation, cell cycle progression and developmental events. Histone deacetylases act via the formation of large multiprotein complexes. Also functions as a deacetylase for non-histone proteins. In addition to protein deacetylase activity, also has protein-lysine deacylase activity: acts as a protein decrotonylase by mediating decrotonylation ((2E)-butenoyl) of histones. The polypeptide is Probable histone deacetylase 1-B (hdac1-b) (Xenopus laevis (African clawed frog)).